Consider the following 192-residue polypeptide: dTTP/UTP pyrophosphatase (192 aa).

Aspartate 72 serves as the catalytic Proton acceptor.

The protein belongs to the Maf family. YhdE subfamily. The cofactor is a divalent metal cation.

Its subcellular location is the cytoplasm. The catalysed reaction is dTTP + H2O = dTMP + diphosphate + H(+). It carries out the reaction UTP + H2O = UMP + diphosphate + H(+). In terms of biological role, nucleoside triphosphate pyrophosphatase that hydrolyzes dTTP and UTP. May have a dual role in cell division arrest and in preventing the incorporation of modified nucleotides into cellular nucleic acids. The chain is dTTP/UTP pyrophosphatase from Geobacter metallireducens (strain ATCC 53774 / DSM 7210 / GS-15).